The chain runs to 83 residues: Exodeoxyribonuclease 7 small subunit (83 aa).

The protein belongs to the XseB family. Heterooligomer composed of large and small subunits.

The protein localises to the cytoplasm. It catalyses the reaction Exonucleolytic cleavage in either 5'- to 3'- or 3'- to 5'-direction to yield nucleoside 5'-phosphates.. Bidirectionally degrades single-stranded DNA into large acid-insoluble oligonucleotides, which are then degraded further into small acid-soluble oligonucleotides. The protein is Exodeoxyribonuclease 7 small subunit of Afipia carboxidovorans (strain ATCC 49405 / DSM 1227 / KCTC 32145 / OM5) (Oligotropha carboxidovorans).